The sequence spans 274 residues: 3-deoxy-manno-octulosonate cytidylyltransferase (274 aa).

The protein belongs to the KdsB family.

The protein resides in the cytoplasm. It carries out the reaction 3-deoxy-alpha-D-manno-oct-2-ulosonate + CTP = CMP-3-deoxy-beta-D-manno-octulosonate + diphosphate. It functions in the pathway nucleotide-sugar biosynthesis; CMP-3-deoxy-D-manno-octulosonate biosynthesis; CMP-3-deoxy-D-manno-octulosonate from 3-deoxy-D-manno-octulosonate and CTP: step 1/1. The protein operates within bacterial outer membrane biogenesis; lipopolysaccharide biosynthesis. In terms of biological role, activates KDO (a required 8-carbon sugar) for incorporation into bacterial lipopolysaccharide in Gram-negative bacteria. The polypeptide is 3-deoxy-manno-octulosonate cytidylyltransferase (Bordetella avium (strain 197N)).